The primary structure comprises 346 residues: Selenide, water dikinase (346 aa).

Residue U16 is part of the active site. Position 16 (U16) is a non-standard amino acid, selenocysteine. ATP contacts are provided by residues K19 and 47-49 (TAD). D50 contacts Mg(2+). ATP is bound by residues D67, D90, and 138 to 140 (GHS). Residue D90 coordinates Mg(2+). Residue D226 coordinates Mg(2+).

It belongs to the selenophosphate synthase 1 family. Class I subfamily. Homodimer. The cofactor is Mg(2+).

It carries out the reaction hydrogenselenide + ATP + H2O = selenophosphate + AMP + phosphate + 2 H(+). Its function is as follows. Synthesizes selenophosphate from selenide and ATP. The sequence is that of Selenide, water dikinase from Haemophilus ducreyi (strain 35000HP / ATCC 700724).